A 1111-amino-acid polypeptide reads, in one-letter code: RecBCD enzyme subunit RecC (1111 aa).

This sequence belongs to the RecC family. In terms of assembly, heterotrimer of RecB, RecC and RecD. All subunits contribute to DNA-binding.

A helicase/nuclease that prepares dsDNA breaks (DSB) for recombinational DNA repair. Binds to DSBs and unwinds DNA via a highly rapid and processive ATP-dependent bidirectional helicase activity. Unwinds dsDNA until it encounters a Chi (crossover hotspot instigator) sequence from the 3' direction. Cuts ssDNA a few nucleotides 3' to the Chi site. The properties and activities of the enzyme are changed at Chi. The Chi-altered holoenzyme produces a long 3'-ssDNA overhang and facilitates RecA-binding to the ssDNA for homologous DNA recombination and repair. Holoenzyme degrades any linearized DNA that is unable to undergo homologous recombination. In the holoenzyme this subunit recognizes the wild-type Chi sequence, and when added to isolated RecB increases its ATP-dependent helicase processivity. This chain is RecBCD enzyme subunit RecC, found in Buchnera aphidicola subsp. Baizongia pistaciae (strain Bp).